Reading from the N-terminus, the 84-residue chain is Large ribosomal subunit protein bL27 (84 aa).

Residues 1 to 21 form a disordered region; that stretch reads MAHKKAGGSTRNGRDSESKRL.

The protein belongs to the bacterial ribosomal protein bL27 family.

The protein is Large ribosomal subunit protein bL27 of Baumannia cicadellinicola subsp. Homalodisca coagulata.